A 70-amino-acid chain; its full sequence is Aurein-3.1 (70 aa).

Positions 1–22 are cleaved as a signal peptide; sequence MAFLKKSLFLVLFLGLVSLSIC. Positions 23–49 are excised as a propeptide; it reads EKEKRQNEEDEDENEAANHEEGSEEKR. The tract at residues 27–48 is disordered; sequence RQNEEDEDENEAANHEEGSEEK. Residues 38-48 are compositionally biased toward basic and acidic residues; it reads AANHEEGSEEK. Ile66 is modified (isoleucine amide).

As to expression, expressed by the skin dorsal glands.

The protein resides in the secreted. The protein localises to the target cell membrane. Its function is as follows. Amphipathic alpha-helical antimicrobial peptide with weak to potent activity against Gram-positive bacteria, and no activity against Gram-negative bacteria. Probably acts by disturbing membrane functions with its amphipathic structure. Shows anticancer activity. This is Aurein-3.1 from Ranoidea aurea (Green and golden bell frog).